Here is a 626-residue protein sequence, read N- to C-terminus: Phosphomethylpyrimidine synthase (626 aa).

Residues Asn237, Met266, Tyr295, His331, 351-353, 392-395, and Glu431 each bind substrate; these read SRG and DGLR. A Zn(2+)-binding site is contributed by His435. Tyr458 is a binding site for substrate. His499 lines the Zn(2+) pocket. Cys579, Cys582, and Cys587 together coordinate [4Fe-4S] cluster.

This sequence belongs to the ThiC family. As to quaternary structure, homodimer. It depends on [4Fe-4S] cluster as a cofactor.

The catalysed reaction is 5-amino-1-(5-phospho-beta-D-ribosyl)imidazole + S-adenosyl-L-methionine = 4-amino-2-methyl-5-(phosphooxymethyl)pyrimidine + CO + 5'-deoxyadenosine + formate + L-methionine + 3 H(+). It functions in the pathway cofactor biosynthesis; thiamine diphosphate biosynthesis. Catalyzes the synthesis of the hydroxymethylpyrimidine phosphate (HMP-P) moiety of thiamine from aminoimidazole ribotide (AIR) in a radical S-adenosyl-L-methionine (SAM)-dependent reaction. This is Phosphomethylpyrimidine synthase from Cupriavidus necator (strain ATCC 17699 / DSM 428 / KCTC 22496 / NCIMB 10442 / H16 / Stanier 337) (Ralstonia eutropha).